The primary structure comprises 171 residues: Inosine/xanthosine triphosphatase (171 aa).

Position 8-13 (Thr-8–Lys-13) interacts with substrate. Residues Glu-38 and Glu-68 each contribute to the Mg(2+) site. Glu-68–Ala-69 is a substrate binding site.

This sequence belongs to the YjjX NTPase family. As to quaternary structure, homodimer. Mg(2+) is required as a cofactor. The cofactor is Mn(2+).

The enzyme catalyses XTP + H2O = XDP + phosphate + H(+). The catalysed reaction is ITP + H2O = IDP + phosphate + H(+). In terms of biological role, phosphatase that hydrolyzes non-canonical purine nucleotides such as XTP and ITP to their respective diphosphate derivatives. Probably excludes non-canonical purines from DNA/RNA precursor pool, thus preventing their incorporation into DNA/RNA and avoiding chromosomal lesions. This Salmonella arizonae (strain ATCC BAA-731 / CDC346-86 / RSK2980) protein is Inosine/xanthosine triphosphatase (yjjX).